The primary structure comprises 776 residues: Semaphorin-4F (776 aa).

Positions M1–G39 are cleaved as a signal peptide. Residues R40–V665 are Extracellular-facing. The region spanning R47 to T515 is the Sema domain. N-linked (GlcNAc...) asparagine glycosylation occurs at N69. C117 and C127 are joined by a disulfide. The N-linked (GlcNAc...) asparagine glycan is linked to N138. 3 cysteine pairs are disulfide-bonded: C145–C154, C278–C389, and C302–C348. N514 is a glycosylation site (N-linked (GlcNAc...) asparagine). One can recognise a PSI domain in the interval N517 to P568. Cystine bridges form between C518-C535, C527-C544, and C592-C633. An Ig-like C2-type domain is found at V585–A640. Residues G666–I686 form a helical membrane-spanning segment. Over G687 to I776 the chain is Cytoplasmic. The disordered stretch occupies residues D702 to S741. A phosphoserine mark is found at S724 and S726. The PDZ-binding signature appears at T774–I776.

It belongs to the semaphorin family. In terms of assembly, interacts (via PDZ-binding motif) with DLG4/SAP90 (via PDZ domain 2); this interaction may promote translocation of DLG4/SAP90 to the membrane. Expressed at low levels in the developing embryo. Expressed at high levels in the lung and adult central nervous system, including the dorsal root ganglia.

It is found in the cell membrane. It localises to the postsynaptic density. Its subcellular location is the perikaryon. The protein resides in the cell projection. The protein localises to the dendrite. Functionally, probable cell surface receptor that regulates oligodendroglial precursor cell migration. Might also regulate differentiation of oligodendroglial precursor cells. Has growth cone collapse activity against retinal ganglion-cell axons. This Rattus norvegicus (Rat) protein is Semaphorin-4F (Sema4f).